A 467-amino-acid chain; its full sequence is tRNA(Ile)-lysidine synthase (467 aa).

Position 26–31 (26–31) interacts with ATP; that stretch reads SGGPDS.

It belongs to the tRNA(Ile)-lysidine synthase family.

It is found in the cytoplasm. The enzyme catalyses cytidine(34) in tRNA(Ile2) + L-lysine + ATP = lysidine(34) in tRNA(Ile2) + AMP + diphosphate + H(+). Its function is as follows. Ligates lysine onto the cytidine present at position 34 of the AUA codon-specific tRNA(Ile) that contains the anticodon CAU, in an ATP-dependent manner. Cytidine is converted to lysidine, thus changing the amino acid specificity of the tRNA from methionine to isoleucine. The polypeptide is tRNA(Ile)-lysidine synthase (Clostridium tetani (strain Massachusetts / E88)).